Reading from the N-terminus, the 447-residue chain is Tryptophan 5-hydroxylase 1 (447 aa).

In terms of domain architecture, ACT spans 22 to 97 (TLIFSLENEV…TVLSVDSPDQ (76 aa)). Phosphoserine; by PKA is present on Ser-61. L-tryptophan contacts are provided by Tyr-238, Arg-260, and Thr-268. Fe cation contacts are provided by His-275, His-280, and Glu-320. Ser-339 and Ile-369 together coordinate L-tryptophan.

Belongs to the biopterin-dependent aromatic amino acid hydroxylase family. Homotetramer. Interacts with DNAJC12. The cofactor is Fe(2+). Post-translationally, ubiquitinated, leading to its degradation by the proteasome. Ubiquitinated is triggered by phosphorylation. In terms of processing, phosphorylated; triggering degradation by the proteasome.

The catalysed reaction is (6R)-L-erythro-5,6,7,8-tetrahydrobiopterin + L-tryptophan + O2 = 5-hydroxy-L-tryptophan + (4aS,6R)-4a-hydroxy-L-erythro-5,6,7,8-tetrahydrobiopterin. It functions in the pathway aromatic compound metabolism; serotonin biosynthesis; serotonin from L-tryptophan: step 1/2. Functionally, oxidizes L-tryptophan to 5-hydroxy-l-tryptophan in the rate-determining step of serotonin biosynthesis. The chain is Tryptophan 5-hydroxylase 1 from Mus musculus (Mouse).